The sequence spans 71 residues: Large ribosomal subunit protein bL31 (71 aa).

Residues Cys16, Cys18, Cys36, and Cys39 each coordinate Zn(2+).

The protein belongs to the bacterial ribosomal protein bL31 family. Type A subfamily. As to quaternary structure, part of the 50S ribosomal subunit. It depends on Zn(2+) as a cofactor.

In terms of biological role, binds the 23S rRNA. This Syntrophus aciditrophicus (strain SB) protein is Large ribosomal subunit protein bL31.